The sequence spans 491 residues: UDP-N-acetylmuramate--L-alanine ligase (491 aa).

Residue 126 to 132 (GTHGKTT) coordinates ATP.

Belongs to the MurCDEF family.

The protein resides in the cytoplasm. It carries out the reaction UDP-N-acetyl-alpha-D-muramate + L-alanine + ATP = UDP-N-acetyl-alpha-D-muramoyl-L-alanine + ADP + phosphate + H(+). It participates in cell wall biogenesis; peptidoglycan biosynthesis. Functionally, cell wall formation. The polypeptide is UDP-N-acetylmuramate--L-alanine ligase (Enterobacter sp. (strain 638)).